The primary structure comprises 96 residues: uncharacterized protein (96 aa).

This is an uncharacterized protein from Escherichia coli (strain K12).